Here is a 390-residue protein sequence, read N- to C-terminus: Neuromedin-B receptor (390 aa).

Over 1–41 (MPPRSLSNLSFPTEANESELVPEVWEKDFLPDSDGTTAELV) the chain is Extracellular. 2 N-linked (GlcNAc...) asparagine glycosylation sites follow: Asn8 and Asn16. A helical membrane pass occupies residues 42 to 65 (IRCVIPSLYLIIISVGLLGNIMLV). Residues 66 to 79 (KIFLTNSAMRNVPN) lie on the Cytoplasmic side of the membrane. A helical membrane pass occupies residues 80–99 (IFISNLAAGDLLLLLTCVPV). Residues 100–117 (DASRYFFDEWVFGKLGCK) lie on the Extracellular side of the membrane. A disulfide bridge connects residues Cys116 and Cys198. Residues 118 to 139 (LIPAIQLTSVGVSVFTLTALSA) traverse the membrane as a helical segment. Residues 140–156 (DRYRAIVNPMDMQTSGV) are Cytoplasmic-facing. A helical transmembrane segment spans residues 157–177 (LLWTSLKAVGIWVVSVLLAVP). Over 178–211 (EAVFSEVARIGSLDNSSFTACIPYPQTDELHPKI) the chain is Extracellular. The N-linked (GlcNAc...) asparagine glycan is linked to Asn192. A helical membrane pass occupies residues 212–235 (HSVLIFLVYFLIPLVIISIYYYHI). At 236–266 (AKTLIKSAHNLPGEYNEHTKKQMETRKRLAK) the chain is on the cytoplasmic side. The chain crosses the membrane as a helical span at residues 267–287 (IVLVFVGCFVFCWFPNHVLYL). The Extracellular portion of the chain corresponds to 288-299 (YRSFNYKEIDPS). A helical transmembrane segment spans residues 300–327 (LGHMIVTLVARVLSFSNSCVNPFALYLL). The Cytoplasmic portion of the chain corresponds to 328–390 (SESFRKHFNS…GHSTKQEIAL (63 aa)). Residue Cys341 is the site of S-palmitoyl cysteine attachment. The residue at position 352 (Ser352) is a Phosphoserine.

Belongs to the G-protein coupled receptor 1 family. As to expression, expressed in a subset of neurons of the pre-Botzinger complex. Within the pre-Botzinger complex, there is some overlap with neurons expressing Grpr with some cells expressing only Grpr or Nmbr while some cells express both. Expressed in dorsal root ganglion neurons and mast cells. Expressed in lung.

The protein resides in the cell membrane. In terms of biological role, receptor for neuromedin-B. Contributes to the maintenance of basal sigh rate through signaling in the pre-Botzinger complex, a cluster of several thousand neurons in the ventrolateral medulla responsible for inspiration during respiratory activity. Contributes to the induction of sneezing following exposure to chemical irritants or allergens which causes release of NMB by nasal sensory neurons and activation of NMBR-expressing neurons in the sneeze-evoking region of the brainstem. These in turn activate neurons of the caudal ventral respiratory group, giving rise to the sneezing response. Contributes to induction of acute itch, possibly through its activation on dorsal root ganglion neurons by the NMB peptide. Plays a role in the innate immune response to influenza A virus infection by enhancing interferon alpha expression and reducing expression of IL6. Plays a role in CSF1-induced proliferation of osteoclast precursors by contributing to the positive regulation of the expression of the CSF1 receptor CSF1R. The sequence is that of Neuromedin-B receptor (Nmbr) from Mus musculus (Mouse).